Consider the following 200-residue polypeptide: GMP synthase [glutamine-hydrolyzing] subunit A (200 aa).

The Glutamine amidotransferase type-1 domain maps to 3-193; that stretch reads KIYVVDNGGQ…IGICASYREI (191 aa). Cys-80 acts as the Nucleophile in catalysis. Active-site residues include His-167 and Glu-169.

In terms of assembly, heterodimer composed of a glutamine amidotransferase subunit (A) and a GMP-binding subunit (B).

It catalyses the reaction XMP + L-glutamine + ATP + H2O = GMP + L-glutamate + AMP + diphosphate + 2 H(+). It participates in purine metabolism; GMP biosynthesis; GMP from XMP (L-Gln route): step 1/1. Its function is as follows. Catalyzes the synthesis of GMP from XMP. This is GMP synthase [glutamine-hydrolyzing] subunit A from Thermoplasma acidophilum (strain ATCC 25905 / DSM 1728 / JCM 9062 / NBRC 15155 / AMRC-C165).